We begin with the raw amino-acid sequence, 123 residues long: Ribosome-binding factor A (123 aa).

This sequence belongs to the RbfA family. In terms of assembly, monomer. Binds 30S ribosomal subunits, but not 50S ribosomal subunits or 70S ribosomes.

The protein localises to the cytoplasm. Its function is as follows. One of several proteins that assist in the late maturation steps of the functional core of the 30S ribosomal subunit. Associates with free 30S ribosomal subunits (but not with 30S subunits that are part of 70S ribosomes or polysomes). Required for efficient processing of 16S rRNA. May interact with the 5'-terminal helix region of 16S rRNA. The protein is Ribosome-binding factor A of Geotalea daltonii (strain DSM 22248 / JCM 15807 / FRC-32) (Geobacter daltonii).